An 879-amino-acid polypeptide reads, in one-letter code: Leucine--tRNA ligase (879 aa).

The 'HIGH' region motif lies at 45 to 55 (PYPSGALHMGH). The 'KMSKS' region signature appears at 637-641 (KMSKS). ATP is bound at residue lysine 640.

Belongs to the class-I aminoacyl-tRNA synthetase family.

It localises to the cytoplasm. It catalyses the reaction tRNA(Leu) + L-leucine + ATP = L-leucyl-tRNA(Leu) + AMP + diphosphate. The chain is Leucine--tRNA ligase from Xylella fastidiosa (strain M12).